Here is a 45-residue protein sequence, read N- to C-terminus: Proteinase inhibitor IIA (45 aa).

Cystine bridges form between Cys10–Cys24, Cys14–Cys35, and Cys20–Cys43.

The protein belongs to the protease inhibitor I20 (potato type II proteinase inhibitor) family.

It localises to the secreted. Functionally, inhibits trypsin strongly and chymotrypsin temporarily. The protein is Proteinase inhibitor IIA of Solanum tuberosum (Potato).